We begin with the raw amino-acid sequence, 396 residues long: Acetate kinase (396 aa).

Residue Asn-7 participates in Mg(2+) binding. An ATP-binding site is contributed by Lys-14. A substrate-binding site is contributed by Arg-86. Asp-143 serves as the catalytic Proton donor/acceptor. ATP contacts are provided by residues 203–207, 277–279, and 325–329; these read HLGNG, DMR, and GIGEH. Glu-380 contacts Mg(2+).

The protein belongs to the acetokinase family. In terms of assembly, homodimer. Mg(2+) serves as cofactor. Requires Mn(2+) as cofactor.

It is found in the cytoplasm. It carries out the reaction acetate + ATP = acetyl phosphate + ADP. It participates in metabolic intermediate biosynthesis; acetyl-CoA biosynthesis; acetyl-CoA from acetate: step 1/2. Its function is as follows. Catalyzes the formation of acetyl phosphate from acetate and ATP. Can also catalyze the reverse reaction. In Sulfurovum sp. (strain NBC37-1), this protein is Acetate kinase.